The primary structure comprises 375 residues: Transaldolase (375 aa).

Lys-145 acts as the Schiff-base intermediate with substrate in catalysis.

Belongs to the transaldolase family. Type 2 subfamily.

It is found in the cytoplasm. It carries out the reaction D-sedoheptulose 7-phosphate + D-glyceraldehyde 3-phosphate = D-erythrose 4-phosphate + beta-D-fructose 6-phosphate. It functions in the pathway carbohydrate degradation; pentose phosphate pathway; D-glyceraldehyde 3-phosphate and beta-D-fructose 6-phosphate from D-ribose 5-phosphate and D-xylulose 5-phosphate (non-oxidative stage): step 2/3. Its function is as follows. Transaldolase is important for the balance of metabolites in the pentose-phosphate pathway. The sequence is that of Transaldolase from Mycobacterium leprae (strain Br4923).